We begin with the raw amino-acid sequence, 509 residues long: MNEQQRLASQQVNSSTKKEEKDYSKYFESVYQPPSLKEAKKRGKEEVKIERDFGLPEEFRNFGTGRKFYIRTYGCQMNEHDTEVMAGIFTALGYEPTFSTEDADVVLLNTCAIRENAENKVFGELGHLKALKRRNPDLLIGVCGCMSQEESVVNKIMQKNQHVDMVFGTHNIHRLPYILKDAMFSKETVVEVWSKEGDVIENLPKVRRGDIKAWVNIMYGCDKFCTYCIVPYTRGKERSRRPEDIIQEIRHLAANGYKEITLLGQNVNAYGKDFEDIEYGLGDLMDELRKVDIARIRFTTSHPRDFDDHLIEVLGKGGNLVEHIHLPVQSGSTEMLKIMARKYSREHYLELVRKIKEAIPNAVLTTDIIVGFPNETDEQFEETMSLYREVGFDTAFTFIYSPREGTPAAKMKDNVPMEVKKERLQRLNALVNKLAIEKNDRYKGQIVEVLVDGESKNNPEVLAGYTRTNKLVNFVAPKSLIGQLVKVKVTDAKTWSLNGELVEEPIEVE.

Residues M1–S15 are compositionally biased toward polar residues. The interval M1 to Y26 is disordered. Residues T16–K25 show a composition bias toward basic and acidic residues. One can recognise an MTTase N-terminal domain in the interval R66 to F184. C75, C111, C145, C221, C225, and C228 together coordinate [4Fe-4S] cluster. The 231-residue stretch at R207–E437 folds into the Radical SAM core domain. The TRAM domain maps to D440–E503.

This sequence belongs to the methylthiotransferase family. MiaB subfamily. In terms of assembly, monomer. It depends on [4Fe-4S] cluster as a cofactor.

It is found in the cytoplasm. The enzyme catalyses N(6)-dimethylallyladenosine(37) in tRNA + (sulfur carrier)-SH + AH2 + 2 S-adenosyl-L-methionine = 2-methylsulfanyl-N(6)-dimethylallyladenosine(37) in tRNA + (sulfur carrier)-H + 5'-deoxyadenosine + L-methionine + A + S-adenosyl-L-homocysteine + 2 H(+). Catalyzes the methylthiolation of N6-(dimethylallyl)adenosine (i(6)A), leading to the formation of 2-methylthio-N6-(dimethylallyl)adenosine (ms(2)i(6)A) at position 37 in tRNAs that read codons beginning with uridine. The protein is tRNA-2-methylthio-N(6)-dimethylallyladenosine synthase of Bacillus cereus (strain ZK / E33L).